Consider the following 245-residue polypeptide: MEEARRQSLEEDFEGQATHTGPKGVINDWRKFKLESEDSDSIPPCKKEILKQMSSPQSRDDKDSKERFSRKMSIQEYELIHQDKEDENCLRKYRRQCMQDMHQKLSFGPRYGFVYELETGEQFLETIEKEQKITTIVVHIYEDGIKGCDALNSSLACLAAEYPMVKFCKIKASNTGAGDRFSSDVLPTLLVYKGGELISNFLSVAEQFAEEFFAGDVESFLNEYGLLPEREIHALEQTSMEEDVE.

A disordered region spans residues Met-1–Arg-67. Residues Met-1–Glu-241 enclose the Phosducin domain. Basic and acidic residues predominate over residues Ser-58–Arg-67. Residue Ser-73 is modified to Phosphoserine; by PKA. The thioredoxin fold stretch occupies residues Tyr-111–Glu-245.

Belongs to the phosducin family. Forms a complex with the beta and gamma subunits of the GTP-binding protein, transducin. Interacts with CRX. Light-induced changes in cyclic nucleotide levels modulate the phosphorylation of this protein by cAMP kinase.

It localises to the cytoplasm. The protein localises to the cytosol. It is found in the nucleus. Its subcellular location is the cell projection. The protein resides in the cilium. It localises to the photoreceptor outer segment. The protein localises to the photoreceptor inner segment. Functionally, may participate in the regulation of visual phototransduction or in the integration of photoreceptor metabolism. Inhibits the transcriptional activation activity of the cone-rod homeobox CRX. The protein is Phosducin (PDC) of Equus caballus (Horse).